Here is a 121-residue protein sequence, read N- to C-terminus: Large ribosomal subunit protein uL14 (121 aa).

This sequence belongs to the universal ribosomal protein uL14 family. Part of the 50S ribosomal subunit. Forms a cluster with proteins L3 and L19. In the 70S ribosome, L14 and L19 interact and together make contacts with the 16S rRNA in bridges B5 and B8.

Binds to 23S rRNA. Forms part of two intersubunit bridges in the 70S ribosome. The sequence is that of Large ribosomal subunit protein uL14 from Prochlorococcus marinus (strain MIT 9313).